Consider the following 141-residue polypeptide: Acetyltransferase YpeA (141 aa).

The N-acetyltransferase domain occupies 1-141 (MEIRVFRQED…GKRLIEDEEY (141 aa)).

Belongs to the acetyltransferase family. YpeA subfamily.

In Escherichia coli O157:H7, this protein is Acetyltransferase YpeA.